Reading from the N-terminus, the 612-residue chain is Putative zinc metalloproteinase C607.06c (612 aa).

Histidine 303 is a binding site for Zn(2+). Residue glutamate 304 is part of the active site. Residues histidine 307 and histidine 313 each contribute to the Zn(2+) site. The 136-residue stretch at 477 to 612 folds into the Jacalin-type lectin domain; that stretch reads VYRSERYGLR…FMDSIGFFIK (136 aa).

Belongs to the peptidase M10B family. The cofactor is Zn(2+).

The protein is Putative zinc metalloproteinase C607.06c of Schizosaccharomyces pombe (strain 972 / ATCC 24843) (Fission yeast).